Here is a 564-residue protein sequence, read N- to C-terminus: Protein NRT1/ PTR FAMILY 5.16 (564 aa).

Transmembrane regions (helical) follow at residues 49–69 (FAYF…LGQS) and 80–100 (WSGT…AYLG). Position 104 is a phosphothreonine (Thr-104). 10 consecutive transmembrane segments (helical) span residues 110–130 (LIYI…LMGL), 145–165 (FFWV…GQGG), 192–212 (FFNW…IVVV), 220–240 (WALG…LFLF), 327–347 (IPIW…ATFF), 358–378 (ILPG…LSIF), 408–428 (IGAG…VEMK), 450–470 (IWWF…SLVG), 486–506 (IGLA…GFLI), and 533–553 (YFYW…LLLS).

This sequence belongs to the major facilitator superfamily. Proton-dependent oligopeptide transporter (POT/PTR) (TC 2.A.17) family. As to expression, expressed in shoots and roots.

Its subcellular location is the membrane. This chain is Protein NRT1/ PTR FAMILY 5.16 (NPF5.16), found in Arabidopsis thaliana (Mouse-ear cress).